We begin with the raw amino-acid sequence, 366 residues long: Histidinol-phosphate aminotransferase 2 (366 aa).

The segment covering 1–11 has biased composition (polar residues); it reads MQVKDQLSSLQ. Positions 1 to 21 are disordered; that stretch reads MQVKDQLSSLQPYKPGKSPEQ. Lys-222 is subject to N6-(pyridoxal phosphate)lysine.

Belongs to the class-II pyridoxal-phosphate-dependent aminotransferase family. Histidinol-phosphate aminotransferase subfamily. As to quaternary structure, homodimer. Pyridoxal 5'-phosphate serves as cofactor.

The catalysed reaction is L-histidinol phosphate + 2-oxoglutarate = 3-(imidazol-4-yl)-2-oxopropyl phosphate + L-glutamate. The protein operates within amino-acid biosynthesis; L-histidine biosynthesis; L-histidine from 5-phospho-alpha-D-ribose 1-diphosphate: step 7/9. The chain is Histidinol-phosphate aminotransferase 2 from Bacillus cereus (strain ATCC 10987 / NRS 248).